The chain runs to 465 residues: Sushi repeat-containing protein SRPX2 (465 aa).

The first 23 residues, 1–23, serve as a signal peptide directing secretion; the sequence is MAIQLTRRGALSLLLFLTPAVMP. 3 Sushi domains span residues 69-119, 120-178, and 262-321; these read ATCY…YCRQ, MRCH…VCVD, and RRCP…VCVP. Cystine bridges form between cysteine 71/cysteine 105, cysteine 91/cysteine 117, cysteine 122/cysteine 163, and cysteine 149/cysteine 176. In terms of domain architecture, HYR spans 177 to 261; the sequence is VDIDPPKIRC…SCKFIVKVQV (85 aa). Intrachain disulfides connect cysteine 264–cysteine 306 and cysteine 292–cysteine 319.

In terms of assembly, forms homooligomers. Interacts with PLAUR (via the UPAR/Ly6 domains), ADAMTS4 and CTSB. Interacts with HGF; the interaction increases the mitogenic activity of HGF. Post-translationally, contains chondroitin sulfate chains.

The protein localises to the secreted. It is found in the cytoplasm. It localises to the cell surface. Its subcellular location is the synapse. In terms of biological role, acts as a ligand for the urokinase plasminogen activator surface receptor. Plays a role in angiogenesis by inducing endothelial cell migration and the formation of vascular network (cords). Involved in cellular migration and adhesion. Increases the phosphorylation levels of FAK. Interacts with and increases the mitogenic activity of HGF. Promotes synapse formation. The polypeptide is Sushi repeat-containing protein SRPX2 (SRPX2) (Bos taurus (Bovine)).